Here is a 556-residue protein sequence, read N- to C-terminus: Formate--tetrahydrofolate ligase (556 aa).

65 to 72 (TPAGEGKS) is an ATP binding site.

It belongs to the formate--tetrahydrofolate ligase family.

The enzyme catalyses (6S)-5,6,7,8-tetrahydrofolate + formate + ATP = (6R)-10-formyltetrahydrofolate + ADP + phosphate. The protein operates within one-carbon metabolism; tetrahydrofolate interconversion. This is Formate--tetrahydrofolate ligase from Streptococcus pneumoniae (strain JJA).